The sequence spans 174 residues: NADH-quinone oxidoreductase subunit I (174 aa).

4Fe-4S ferredoxin-type domains lie at 44–74 and 90–119; these read LNRY…VEGD and RVYQ…MTND. The [4Fe-4S] cluster site is built by Cys-54, Cys-57, Cys-60, Cys-64, Cys-99, Cys-102, Cys-105, and Cys-109.

Belongs to the complex I 23 kDa subunit family. As to quaternary structure, NDH-1 is composed of 14 different subunits. Subunits NuoA, H, J, K, L, M, N constitute the membrane sector of the complex. [4Fe-4S] cluster is required as a cofactor.

The protein localises to the cell membrane. The catalysed reaction is a quinone + NADH + 5 H(+)(in) = a quinol + NAD(+) + 4 H(+)(out). In terms of biological role, NDH-1 shuttles electrons from NADH, via FMN and iron-sulfur (Fe-S) centers, to quinones in the respiratory chain. The immediate electron acceptor for the enzyme in this species is believed to be menaquinone. Couples the redox reaction to proton translocation (for every two electrons transferred, four hydrogen ions are translocated across the cytoplasmic membrane), and thus conserves the redox energy in a proton gradient. The chain is NADH-quinone oxidoreductase subunit I from Mycobacterium sp. (strain JLS).